A 313-amino-acid chain; its full sequence is MALPEFSMRQLLEAGAHFGHQTHRWNPKMDRYIFGSRSNIHIIDLSQSIPLLHQALVKVREVAAAGGRVLFVGTKRQASDPVATAAKRCAQYYVNHRWLGGTLTNWRTVSGSIARLRELEGIMGGESAGRSKKELLQLTRERDKLELSLGGIKDMGGIPDIMFVIDTNKEAIAILEARKLNIPVVAILDTNCDPDGITYPIPGNDDAARALQLYCDLIADAVLDGLAAGQANSGVDLGASIAPIEPTLARELTPEPVAEAAAPEVAAAEVAEQEAAFEAAAAPAAPAVEPAPEAAQEATAEAIEAVAEEPAAS.

The tract at residues 281–301 (AAPAAPAVEPAPEAAQEATAE) is disordered.

It belongs to the universal ribosomal protein uS2 family.

The polypeptide is Small ribosomal subunit protein uS2 (Caulobacter sp. (strain K31)).